A 394-amino-acid chain; its full sequence is 1-deoxy-D-xylulose 5-phosphate reductoisomerase (394 aa).

Residues threonine 10, glycine 11, serine 12, isoleucine 13, glycine 38, arginine 39, asparagine 40, and asparagine 123 each contribute to the NADPH site. Lysine 124 contacts 1-deoxy-D-xylulose 5-phosphate. NADPH is bound at residue glutamate 125. Aspartate 149 contributes to the Mn(2+) binding site. Serine 150, glutamate 151, serine 175, and histidine 198 together coordinate 1-deoxy-D-xylulose 5-phosphate. Glutamate 151 contacts Mn(2+). Glycine 204 contributes to the NADPH binding site. 1-deoxy-D-xylulose 5-phosphate is bound by residues serine 211, asparagine 216, lysine 217, and glutamate 220. Glutamate 220 contacts Mn(2+).

This sequence belongs to the DXR family. Mg(2+) serves as cofactor. It depends on Mn(2+) as a cofactor.

The catalysed reaction is 2-C-methyl-D-erythritol 4-phosphate + NADP(+) = 1-deoxy-D-xylulose 5-phosphate + NADPH + H(+). It functions in the pathway isoprenoid biosynthesis; isopentenyl diphosphate biosynthesis via DXP pathway; isopentenyl diphosphate from 1-deoxy-D-xylulose 5-phosphate: step 1/6. Functionally, catalyzes the NADPH-dependent rearrangement and reduction of 1-deoxy-D-xylulose-5-phosphate (DXP) to 2-C-methyl-D-erythritol 4-phosphate (MEP). In Cereibacter sphaeroides (strain ATCC 17025 / ATH 2.4.3) (Rhodobacter sphaeroides), this protein is 1-deoxy-D-xylulose 5-phosphate reductoisomerase.